A 158-amino-acid chain; its full sequence is Transcription elongation factor GreA (158 aa).

This sequence belongs to the GreA/GreB family.

In terms of biological role, necessary for efficient RNA polymerase transcription elongation past template-encoded arresting sites. The arresting sites in DNA have the property of trapping a certain fraction of elongating RNA polymerases that pass through, resulting in locked ternary complexes. Cleavage of the nascent transcript by cleavage factors such as GreA or GreB allows the resumption of elongation from the new 3'terminus. GreA releases sequences of 2 to 3 nucleotides. This Psychrobacter arcticus (strain DSM 17307 / VKM B-2377 / 273-4) protein is Transcription elongation factor GreA.